A 266-amino-acid polypeptide reads, in one-letter code: Interleukin-1 beta (266 aa).

Positions 1–113 (MATVPEPTNE…ETYDDDLLCD (113 aa)) are excised as a propeptide.

It belongs to the IL-1 family. Monomer. In its precursor form, weakly interacts with full-length MEFV; the mature cytokine does not interact at all. Interacts with integrins ITGAV:ITGBV and ITGA5:ITGB1; integrin-binding is required for IL1B signaling. Interacts with cargo receptor TMED10; the interaction is direct and is required for the secretion of IL1B mature form. Interacts with HSP90AB1; the interaction facilitates cargo translocation into the ERGIC. Interacts with HSP90B1; the interaction facilitates cargo translocation into the ERGIC.

It is found in the cytoplasm. The protein resides in the cytosol. The protein localises to the secreted. It localises to the lysosome. Its subcellular location is the extracellular exosome. Functionally, potent pro-inflammatory cytokine. Initially discovered as the major endogenous pyrogen, induces prostaglandin synthesis, neutrophil influx and activation, T-cell activation and cytokine production, B-cell activation and antibody production, and fibroblast proliferation and collagen production. Promotes Th17 differentiation of T-cells. Synergizes with IL12/interleukin-12 to induce IFNG synthesis from T-helper 1 (Th1) cells. Plays a role in angiogenesis by inducing VEGF production synergistically with TNF and IL6. Involved in transduction of inflammation downstream of pyroptosis: its mature form is specifically released in the extracellular milieu by passing through the gasdermin-D (GSDMD) pore. The sequence is that of Interleukin-1 beta (IL1B) from Delphinapterus leucas (Beluga whale).